Here is a 242-residue protein sequence, read N- to C-terminus: UPF0173 metal-dependent hydrolase APE_1117 (242 aa).

This sequence belongs to the UPF0173 family.

The protein is UPF0173 metal-dependent hydrolase APE_1117 of Aeropyrum pernix (strain ATCC 700893 / DSM 11879 / JCM 9820 / NBRC 100138 / K1).